Consider the following 411-residue polypeptide: Ribose-phosphate pyrophosphokinase 3, chloroplastic (411 aa).

Residues 1 to 39 (MAAISPANATTAASLSLPQFSSTSSSLSSSSSPSFLNFK) constitute a chloroplast transit peptide. Residues Asp-231 and His-233 each coordinate Mg(2+). The binding of phosphoribosylpyrophosphate stretch occupies residues 314–329 (GRHVVIVDDLVQSGGT).

Belongs to the ribose-phosphate pyrophosphokinase family.

The protein resides in the plastid. It localises to the chloroplast. It carries out the reaction D-ribose 5-phosphate + ATP = 5-phospho-alpha-D-ribose 1-diphosphate + AMP + H(+). This Arabidopsis thaliana (Mouse-ear cress) protein is Ribose-phosphate pyrophosphokinase 3, chloroplastic (PRS3).